The chain runs to 217 residues: Histone H1C (217 aa).

Low complexity-rich tracts occupy residues 1–11 (MAETASTETTP) and 28–45 (KKAAGGAKAKKPSGPSAS). Disordered stretches follow at residues 1-45 (MAET…PSAS) and 123-217 (VAKK…AAKK). Positions 40–113 (SGPSASELIV…GASGSFKLNK (74 aa)) constitute an H15 domain. 2 stretches are compositionally biased toward basic residues: residues 123–151 (VAKKKLVAPKAKKPVTAKKKPKSPKKPKK) and 159–217 (SPKK…AAKK).

The protein belongs to the histone H1/H5 family.

It localises to the nucleus. It is found in the chromosome. In terms of biological role, histones H1 are necessary for the condensation of nucleosome chains into higher-order structures. This chain is Histone H1C, found in Xenopus laevis (African clawed frog).